Reading from the N-terminus, the 446-residue chain is Tubulin alpha chain-like 3 (446 aa).

An MREC motif motif is present at residues 1–4; sequence MREC. Residues Gln-11, Glu-78, Ser-147, Gly-151, Thr-152, Thr-186, Asn-213, and Asn-235 each coordinate GTP. Glu-78 contacts Mg(2+). The active site involves Glu-261.

It belongs to the tubulin family. As to quaternary structure, dimer of alpha and beta chains. A typical microtubule is a hollow water-filled tube with an outer diameter of 25 nm and an inner diameter of 15 nM. Alpha-beta heterodimers associate head-to-tail to form protofilaments running lengthwise along the microtubule wall with the beta-tubulin subunit facing the microtubule plus end conferring a structural polarity. Microtubules usually have 13 protofilaments but different protofilament numbers can be found in some organisms and specialized cells. Requires Mg(2+) as cofactor. Some glutamate residues at the C-terminus are polyglycylated, resulting in polyglycine chains on the gamma-carboxyl group. Glycylation is mainly limited to tubulin incorporated into axonemes (cilia and flagella) whereas glutamylation is prevalent in neuronal cells, centrioles, axonemes, and the mitotic spindle. Both modifications can coexist on the same protein on adjacent residues, and lowering polyglycylation levels increases polyglutamylation, and reciprocally. Cilia and flagella glycylation is required for their stability and maintenance. Flagella glycylation controls sperm motility. In terms of processing, some glutamate residues at the C-terminus are polyglutamylated, resulting in polyglutamate chains on the gamma-carboxyl group. Polyglutamylation plays a key role in microtubule severing by spastin (SPAST). SPAST preferentially recognizes and acts on microtubules decorated with short polyglutamate tails: severing activity by SPAST increases as the number of glutamates per tubulin rises from one to eight, but decreases beyond this glutamylation threshold. Glutamylation is also involved in cilia motility.

Its subcellular location is the cytoplasm. It localises to the cytoskeleton. The enzyme catalyses GTP + H2O = GDP + phosphate + H(+). In terms of biological role, tubulin is the major constituent of microtubules, a cylinder consisting of laterally associated linear protofilaments composed of alpha- and beta-tubulin heterodimers. Microtubules grow by the addition of GTP-tubulin dimers to the microtubule end, where a stabilizing cap forms. Below the cap, tubulin dimers are in GDP-bound state, owing to GTPase activity of alpha-tubulin. In Mus musculus (Mouse), this protein is Tubulin alpha chain-like 3 (Tubal3).